A 494-amino-acid chain; its full sequence is Alpha-amylase-related protein (494 aa).

Positions 1–20 (MFKFATAVILCLVAASSTLA) are cleaved as a signal peptide. Gln21 is subject to Pyrrolidone carboxylic acid. A disulfide bond links Cys48 and Cys104. Positions 118, 169, and 178 each coordinate Ca(2+). A disulfide bridge connects residues Cys157 and Cys171. Arg206 serves as a coordination point for chloride. Asp208 serves as the catalytic Nucleophile. His212 lines the Ca(2+) pocket. Glu245 acts as the Proton donor in catalysis. Chloride-binding residues include Asn308 and Arg343. 3 disulfide bridges follow: Cys376/Cys382, Cys418/Cys441, and Cys448/Cys460.

The protein belongs to the glycosyl hydrolase 13 family. Monomer. Ca(2+) is required as a cofactor. The cofactor is chloride.

The protein localises to the secreted. It carries out the reaction Endohydrolysis of (1-&gt;4)-alpha-D-glucosidic linkages in polysaccharides containing three or more (1-&gt;4)-alpha-linked D-glucose units.. This Drosophila bipectinata (Fruit fly) protein is Alpha-amylase-related protein (Amyrel).